Consider the following 309-residue polypeptide: Elongation factor Ts (309 aa).

The tract at residues 82–85 (TDFV) is involved in Mg(2+) ion dislocation from EF-Tu.

This sequence belongs to the EF-Ts family.

The protein resides in the cytoplasm. Its function is as follows. Associates with the EF-Tu.GDP complex and induces the exchange of GDP to GTP. It remains bound to the aminoacyl-tRNA.EF-Tu.GTP complex up to the GTP hydrolysis stage on the ribosome. This chain is Elongation factor Ts, found in Rickettsia peacockii (strain Rustic).